Here is an 88-residue protein sequence, read N- to C-terminus: Cell division topological specificity factor (88 aa).

The protein belongs to the MinE family.

Functionally, prevents the cell division inhibition by proteins MinC and MinD at internal division sites while permitting inhibition at polar sites. This ensures cell division at the proper site by restricting the formation of a division septum at the midpoint of the long axis of the cell. This Aromatoleum aromaticum (strain DSM 19018 / LMG 30748 / EbN1) (Azoarcus sp. (strain EbN1)) protein is Cell division topological specificity factor.